A 570-amino-acid polypeptide reads, in one-letter code: Glycine--tRNA ligase (570 aa).

Substrate contacts are provided by Arg-99 and Glu-165. ATP-binding positions include 197 to 199 (RNE), 207 to 212 (LRLREF), 324 to 325 (EC), and 443 to 446 (GIDR). Residue 212 to 216 (FTQAE) participates in substrate binding. 439–443 (EPSFG) contributes to the substrate binding site.

Belongs to the class-II aminoacyl-tRNA synthetase family.

The protein localises to the cytoplasm. It carries out the reaction tRNA(Gly) + glycine + ATP = glycyl-tRNA(Gly) + AMP + diphosphate. Catalyzes the attachment of glycine to tRNA(Gly). The chain is Glycine--tRNA ligase from Thermococcus gammatolerans (strain DSM 15229 / JCM 11827 / EJ3).